We begin with the raw amino-acid sequence, 473 residues long: LEC14B protein (473 aa).

5 WD repeats span residues 212-242, 254-285, 301-331, 377-413, and 425-455; these read GYSFGVFSIKFSTDGREIVAGTSDESICVYD, AHESDVNSVCFADESGHLIYSGSDDNLCKVWD, GHLEGITFIDSRGDGRYFISNGKDQTIKLWD, GHSVLCTLIRCYFSPDYSTGQKYIYTGSHDANVYIYD, and YHKATVRDCSWHPNYPMLVSSSFDGEIVKWE.

Belongs to the WD repeat LEC14B family.

This Lithospermum erythrorhizon (Purple gromwell) protein is LEC14B protein.